Reading from the N-terminus, the 523-residue chain is Sugar carrier protein C (523 aa).

Over 1–25 (MPAVGGIPPSGGNRKVYPGNLTLYV) the chain is Cytoplasmic. 12 helical membrane passes run 26 to 46 (TVTC…IGIS), 86 to 106 (MFTS…STIT), 120 to 140 (VLFC…MLIL), 143 to 163 (ILLG…LSEM), 172 to 192 (LNIG…VLNY), 205 to 225 (LSLG…LVLP), 298 to 320 (LTGI…FGSD), 327 to 347 (VITG…VDKW), 351 to 371 (FLFL…AACI), 387 to 407 (WYAV…AWSW), 433 to 453 (SVNM…LCHL), and 456 to 476 (GLFI…YYFL). Topologically, residues 477–523 (PETKGIPIEEMGQVWKQHWYWSRYVVDEDYPNGGLEMGKEGRIPKNV) are cytoplasmic.

Belongs to the major facilitator superfamily. Sugar transporter (TC 2.A.1.1) family.

It localises to the membrane. The sequence is that of Sugar carrier protein C (STC) from Ricinus communis (Castor bean).